The sequence spans 305 residues: uncharacterized protein (305 aa).

Transmembrane regions (helical) follow at residues 4–24, 38–58, 67–87, 95–115, 125–145, 152–172, 183–203, 215–235, 250–270, and 272–292; these read LNIYIMLLGFSIFTGATFNLA, AWRFGLAAAVMLIILIFTEGI, AVSYIVLGIIGIFGFNALFFV, VNGALIMGLNPLLTAILARII, VLGIFFAFIGVLLVITQGSIE, ISGGDLIIFTGNVCWALYGVL, LSTTTYTMVIGAVSLIVVSLF, IGVWGAIAFMAFFTSVLGYLW, LFFNLVPVVTMIISFAVGTPI, and VFQVIGAVLVILGVLTASGVI. EamA domains follow at residues 15–140 and 164–290; these read IFTG…LVIT and VCWA…TASG.

It belongs to the EamA transporter family.

Its subcellular location is the cell membrane. This is an uncharacterized protein from Bacillus subtilis (strain 168).